Consider the following 198-residue polypeptide: Zinc finger protein 41 homolog (198 aa).

Residues 1–12 (MEKPAGRKKKTP) show a composition bias toward basic residues. The segment at 1-55 (MEKPAGRKKKTPTPREEADVQKSALREEKVSGDRKPPERPTVPRKPRTEPCLSPE) is disordered. The span at 13–38 (TPREEADVQKSALREEKVSGDRKPPE) shows a compositional bias: basic and acidic residues. 4 consecutive C2H2-type zinc fingers follow at residues 87–109 (YECS…QRVH), 115–137 (FKCA…QRTH), 143–165 (FKCG…QKTH), and 171–193 (YECT…QKRH).

The protein belongs to the krueppel C2H2-type zinc-finger protein family.

The protein resides in the nucleus. A putative DNA-binding regulatory protein associated with meiosis in spermatogenesis. The chain is Zinc finger protein 41 homolog (ZFP41) from Homo sapiens (Human).